Reading from the N-terminus, the 233-residue chain is Biosynthetic peptidoglycan transglycosylase (233 aa).

The chain crosses the membrane as a helical span at residues 8 to 28 (LIALPVGIFIFFNAYVYGNII).

This sequence belongs to the glycosyltransferase 51 family.

It localises to the cell inner membrane. It carries out the reaction [GlcNAc-(1-&gt;4)-Mur2Ac(oyl-L-Ala-gamma-D-Glu-L-Lys-D-Ala-D-Ala)](n)-di-trans,octa-cis-undecaprenyl diphosphate + beta-D-GlcNAc-(1-&gt;4)-Mur2Ac(oyl-L-Ala-gamma-D-Glu-L-Lys-D-Ala-D-Ala)-di-trans,octa-cis-undecaprenyl diphosphate = [GlcNAc-(1-&gt;4)-Mur2Ac(oyl-L-Ala-gamma-D-Glu-L-Lys-D-Ala-D-Ala)](n+1)-di-trans,octa-cis-undecaprenyl diphosphate + di-trans,octa-cis-undecaprenyl diphosphate + H(+). The protein operates within cell wall biogenesis; peptidoglycan biosynthesis. Its function is as follows. Peptidoglycan polymerase that catalyzes glycan chain elongation from lipid-linked precursors. The chain is Biosynthetic peptidoglycan transglycosylase from Neisseria meningitidis serogroup A / serotype 4A (strain DSM 15465 / Z2491).